Reading from the N-terminus, the 176-residue chain is Large ribosomal subunit protein uL10 (176 aa).

The protein belongs to the universal ribosomal protein uL10 family. As to quaternary structure, part of the ribosomal stalk of the 50S ribosomal subunit. The N-terminus interacts with L11 and the large rRNA to form the base of the stalk. The C-terminus forms an elongated spine to which L12 dimers bind in a sequential fashion forming a multimeric L10(L12)X complex.

In terms of biological role, forms part of the ribosomal stalk, playing a central role in the interaction of the ribosome with GTP-bound translation factors. The chain is Large ribosomal subunit protein uL10 from Mycobacteroides abscessus (strain ATCC 19977 / DSM 44196 / CCUG 20993 / CIP 104536 / JCM 13569 / NCTC 13031 / TMC 1543 / L948) (Mycobacterium abscessus).